A 137-amino-acid polypeptide reads, in one-letter code: UPF0148 protein MJ0890 (137 aa).

The protein belongs to the UPF0148 family.

This is UPF0148 protein MJ0890 from Methanocaldococcus jannaschii (strain ATCC 43067 / DSM 2661 / JAL-1 / JCM 10045 / NBRC 100440) (Methanococcus jannaschii).